The sequence spans 414 residues: Probable peptidoglycan glycosyltransferase FtsW (414 aa).

The Cytoplasmic segment spans residues 1–12 (MRLSLPRLKMPR). Residues 13 to 33 (LPGFSILVWISTALKGWVMGS) form a helical membrane-spanning segment. Residues 34-47 (REKDTDSLIMYDRT) lie on the Periplasmic side of the membrane. A helical transmembrane segment spans residues 48-68 (LLWLTFGLAAIGFIMVTSASM). Topologically, residues 69 to 86 (PIGQRLTNDPFFFAKRDG) are cytoplasmic. The chain crosses the membrane as a helical span at residues 87 to 107 (VYLILAFILAIITLRLPMEFW). Residues 108–111 (QRYS) lie on the Periplasmic side of the membrane. A helical transmembrane segment spans residues 112-132 (ATMLLGSIILLMIVLVVGSSV). Topologically, residues 133-174 (KGASRWIDLGLLRIQPAELTKLSLFCYIANYLVRKGDEVRNN) are cytoplasmic. The helical transmembrane segment at 175 to 194 (LRGFLKPMGVILVLAVLLLA) threads the bilayer. Topologically, residues 195 to 197 (QPD) are periplasmic. A helical membrane pass occupies residues 198 to 217 (LGTVVVLFVTTLAMLFLAGA). Residue Lys218 is a topological domain, cytoplasmic. Residues 219–239 (LWQFIAIIGMGISAVVLLILA) form a helical membrane-spanning segment. At 240–301 (EPYRIRRVTA…PEAHTDFIFA (62 aa)) the chain is on the periplasmic side. The helical transmembrane segment at 302 to 322 (IIGEELGYVGVVLALLMVFFV) threads the bilayer. Topologically, residues 323 to 342 (AFRAMSIGRKALEIDHRFSG) are cytoplasmic. A helical transmembrane segment spans residues 343-363 (FLACSIGIWFSFQALVNVGAA). Residues 364–373 (AGMLPTKGLT) lie on the Periplasmic side of the membrane. A helical membrane pass occupies residues 374 to 394 (LPLISYGGSSLLIMSTAIMML). At 395-414 (LRIDYETRLEKAQAFVRGSR) the chain is on the cytoplasmic side.

The protein belongs to the SEDS family. FtsW subfamily.

The protein resides in the cell inner membrane. The enzyme catalyses [GlcNAc-(1-&gt;4)-Mur2Ac(oyl-L-Ala-gamma-D-Glu-L-Lys-D-Ala-D-Ala)](n)-di-trans,octa-cis-undecaprenyl diphosphate + beta-D-GlcNAc-(1-&gt;4)-Mur2Ac(oyl-L-Ala-gamma-D-Glu-L-Lys-D-Ala-D-Ala)-di-trans,octa-cis-undecaprenyl diphosphate = [GlcNAc-(1-&gt;4)-Mur2Ac(oyl-L-Ala-gamma-D-Glu-L-Lys-D-Ala-D-Ala)](n+1)-di-trans,octa-cis-undecaprenyl diphosphate + di-trans,octa-cis-undecaprenyl diphosphate + H(+). It participates in cell wall biogenesis; peptidoglycan biosynthesis. Its function is as follows. Peptidoglycan polymerase that is essential for cell division. This chain is Probable peptidoglycan glycosyltransferase FtsW, found in Escherichia coli O157:H7.